We begin with the raw amino-acid sequence, 1558 residues long: ABC transporter NFT1 (1558 aa).

Residues 1–29 (MIKNGTCPYWERDDLSECARREYIEFKFP) are Extracellular-facing. N-linked (GlcNAc...) asparagine glycosylation is present at N4. A helical membrane pass occupies residues 30-50 (LFILLTGMIYAFCKVFRAFYL). Residues 51 to 103 (RGKNHTNEAPEFEEQGNGNHEYARFSVLRLKSAWESRSFCNVNNRSTFDKFKK) are Cytoplasmic-facing. Residues 104 to 124 (FIEGAFIVLQLTIHLYILSSM) form a helical membrane-spanning segment. Over 125-130 (PMDNKK) the chain is Extracellular. The chain crosses the membrane as a helical span at residues 131–151 (FFHQGFLVQMFLWILLLVVIT). Over 152–169 (LRLISASQSFRWVLACKR) the chain is Cytoplasmic. Residues 170–190 (DLWAVSFYSYASLFTLSILPL) form a helical membrane-spanning segment. The Extracellular portion of the chain corresponds to 191 to 201 (RSVFIGKIKDK). A helical transmembrane segment spans residues 202–222 (IMVKYIISETFIDLALLLLLS). Residues 223–302 (TSSIEGTRYS…SSKKGRLLPN (80 aa)) are Cytoplasmic-facing. Residues 303-323 (IICYFKAVFISQLFLAFVSSF) traverse the membrane as a helical segment. In terms of domain architecture, ABC transmembrane type-1 1 spans 311-621 (FISQLFLAFV…IASTVSLLIQ (311 aa)). Residues 324–351 (LNFVPSLLMPRILSYVNDPKSKSWNLVS) lie on the Extracellular side of the membrane. Residues 352–374 (LYVSSMLVSKIIATTCRGQGLFL) traverse the membrane as a helical segment. The Cytoplasmic portion of the chain corresponds to 375-449 (GEKGTMQLRT…VMSIDAFKVS (75 aa)). The tract at residues 410 to 434 (NASTSFEENPDSSEAEPRKKSSRKD) is disordered. Positions 424-434 (AEPRKKSSRKD) are enriched in basic and acidic residues. A helical transmembrane segment spans residues 450–470 (EAMNTFYLACEAVFMTVTALM). The Extracellular segment spans residues 471-481 (ILYSLLGWSAF). Residues 482-504 (AGTFALLAMIPLNFWCATFYGNY) form a helical membrane-spanning segment. Residues 505-558 (QADQLILTDKRTSGISEALNSIRVIKLLAWENLFYQKIINVRDGEIRLLKKKAT) lie on the Cytoplasmic side of the membrane. Residues 559 to 579 (IFFLNHLIWFFGPTLVSAITF) traverse the membrane as a helical segment. At 580-584 (SVFIK) the chain is on the extracellular side. The helical transmembrane segment at 585–605 (FQNQTLTPTIAFTALSLFAIL) threads the bilayer. The Cytoplasmic segment spans residues 606 to 953 (RTPMDQIAST…KFSAYKWLAD (348 aa)). Residues 651 to 892 (FGFEDASMEW…NEFLRESINN (242 aa)) enclose the ABC transporter 1 domain. 686 to 693 (GPTGSGKS) contacts ATP. The segment covering 892–901 (NDSKNTTHNQ) has biased composition (polar residues). Residues 892–926 (NDSKNTTHNQIDLKRSTTSKKTKNGDPEGGNSQDE) form a disordered region. A helical transmembrane segment spans residues 954 to 974 (YFGGLGVVFVFTSSSILIHGI). The ABC transmembrane type-1 2 domain occupies 961–1251 (VFVFTSSSIL…IIKVFSSVEL (291 aa)). Topologically, residues 975–1013 (TLSQGFWLRYWLDTGSSGSKSTWLYRIVEGHSNIYFLLT) are extracellular. The chain crosses the membrane as a helical span at residues 1014 to 1034 (YIIIGLVSSFLTSGKVWIAII). Residues 1035–1082 (SGTNVTKKIFAKLLSSILYAKLRFHNVTPTGRIMNRFSKDMDIIDQQL) lie on the Cytoplasmic side of the membrane. A helical membrane pass occupies residues 1083 to 1105 (IPNFEGLSYSVVVCLWIILLIGY). Residues 1106-1109 (VTPQ) lie on the Extracellular side of the membrane. The helical transmembrane segment at 1110–1132 (FLLFAIPLCALYYTVCTLYLRAS) threads the bilayer. Over 1133–1199 (RELKRIDNIN…ATEWITYRVD (67 aa)) the chain is Cytoplasmic. Residues 1200 to 1220 (IIGTLVLFSSSVMIIMKASYL) form a helical membrane-spanning segment. The Extracellular segment spans residues 1221–1222 (DA). Residues 1223–1243 (GLAGILLSNAFSFTETAQWII) traverse the membrane as a helical segment. The Cytoplasmic segment spans residues 1244–1558 (KVFSSVELLM…LAKVSFDNKR (315 aa)). The ABC transporter 2 domain occupies 1285 to 1538 (VELKNLSLRY…RNTIFYRLCR (254 aa)). 1319-1326 (GRTGAGKS) is a binding site for ATP.

Belongs to the ABC transporter superfamily. ABCC family. Conjugate transporter (TC 3.A.1.208) subfamily.

Its subcellular location is the membrane. In Saccharomyces cerevisiae (Baker's yeast), this protein is ABC transporter NFT1 (NFT1).